Reading from the N-terminus, the 181-residue chain is Inner membrane-spanning protein YciB (181 aa).

Transmembrane regions (helical) follow at residues 10–30 (LVIF…GALI), 50–70 (MHLI…VFHD), 72–92 (AFIK…LGVS), 118–138 (VTWY…YVAF), and 148–168 (FKVF…VFYL).

This sequence belongs to the YciB family.

The protein localises to the cell inner membrane. Its function is as follows. Plays a role in cell envelope biogenesis, maintenance of cell envelope integrity and membrane homeostasis. In Shewanella oneidensis (strain ATCC 700550 / JCM 31522 / CIP 106686 / LMG 19005 / NCIMB 14063 / MR-1), this protein is Inner membrane-spanning protein YciB.